Here is a 626-residue protein sequence, read N- to C-terminus: Elongation factor 4 (626 aa).

In terms of domain architecture, tr-type G spans 14–195 (SVIRNFCIIA…QIVMDVPAPH (182 aa)). GTP-binding positions include 26 to 31 (DHGKST) and 142 to 145 (NKID). The tract at residues 603 to 626 (LSTGEDSNDRDTKDKIRAAQKTEG) is disordered. The segment covering 609-626 (SNDRDTKDKIRAAQKTEG) has biased composition (basic and acidic residues).

This sequence belongs to the TRAFAC class translation factor GTPase superfamily. Classic translation factor GTPase family. LepA subfamily.

The protein localises to the cell membrane. The enzyme catalyses GTP + H2O = GDP + phosphate + H(+). Its function is as follows. Required for accurate and efficient protein synthesis under certain stress conditions. May act as a fidelity factor of the translation reaction, by catalyzing a one-codon backward translocation of tRNAs on improperly translocated ribosomes. Back-translocation proceeds from a post-translocation (POST) complex to a pre-translocation (PRE) complex, thus giving elongation factor G a second chance to translocate the tRNAs correctly. Binds to ribosomes in a GTP-dependent manner. The polypeptide is Elongation factor 4 (Bifidobacterium longum (strain DJO10A)).